Reading from the N-terminus, the 76-residue chain is DNA gyrase inhibitor YacG (76 aa).

Zn(2+)-binding residues include Cys-20, Cys-23, Cys-39, and Cys-43. Residues 54-76 (EEKSIPGAPDLSDSDGWSDDMGY) form a disordered region. Acidic residues predominate over residues 65 to 76 (SDSDGWSDDMGY).

This sequence belongs to the DNA gyrase inhibitor YacG family. As to quaternary structure, interacts with GyrB. Requires Zn(2+) as cofactor.

Functionally, inhibits all the catalytic activities of DNA gyrase by preventing its interaction with DNA. Acts by binding directly to the C-terminal domain of GyrB, which probably disrupts DNA binding by the gyrase. This Photobacterium profundum (strain SS9) protein is DNA gyrase inhibitor YacG.